We begin with the raw amino-acid sequence, 83 residues long: Small ribosomal subunit protein bS16 (83 aa).

This sequence belongs to the bacterial ribosomal protein bS16 family.

This chain is Small ribosomal subunit protein bS16, found in Pseudomonas putida (strain W619).